A 903-amino-acid chain; its full sequence is Protein translocase subunit SecA (903 aa).

ATP-binding positions include glutamine 87, 105 to 109, and aspartate 512; that span reads GEGKT. The interval 853-903 is disordered; it reads KQQQLSHYEENALVTEDPNAPATAERKVGRNDPCPCGSGKKYKQCHGRLQS. Zn(2+) is bound by residues cysteine 886, cysteine 888, cysteine 897, and histidine 898. Residues 892–903 show a composition bias toward basic residues; it reads KKYKQCHGRLQS.

Belongs to the SecA family. In terms of assembly, monomer and homodimer. Part of the essential Sec protein translocation apparatus which comprises SecA, SecYEG and auxiliary proteins SecDF-YajC and YidC. It depends on Zn(2+) as a cofactor.

It localises to the cell inner membrane. The protein resides in the cytoplasm. The catalysed reaction is ATP + H2O + cellular proteinSide 1 = ADP + phosphate + cellular proteinSide 2.. Functionally, part of the Sec protein translocase complex. Interacts with the SecYEG preprotein conducting channel. Has a central role in coupling the hydrolysis of ATP to the transfer of proteins into and across the cell membrane, serving both as a receptor for the preprotein-SecB complex and as an ATP-driven molecular motor driving the stepwise translocation of polypeptide chains across the membrane. This Serratia proteamaculans (strain 568) protein is Protein translocase subunit SecA.